Consider the following 329-residue polypeptide: Beta-ketoacyl-[acyl-carrier-protein] synthase III (329 aa).

Active-site residues include Cys-113 and His-255. The interval Gln-256–Arg-260 is ACP-binding. Asn-285 is an active-site residue.

It belongs to the thiolase-like superfamily. FabH family. As to quaternary structure, homodimer.

It is found in the cytoplasm. The enzyme catalyses malonyl-[ACP] + acetyl-CoA + H(+) = 3-oxobutanoyl-[ACP] + CO2 + CoA. The protein operates within lipid metabolism; fatty acid biosynthesis. Its function is as follows. Catalyzes the condensation reaction of fatty acid synthesis by the addition to an acyl acceptor of two carbons from malonyl-ACP. Catalyzes the first condensation reaction which initiates fatty acid synthesis and may therefore play a role in governing the total rate of fatty acid production. Possesses both acetoacetyl-ACP synthase and acetyl transacylase activities. Its substrate specificity determines the biosynthesis of branched-chain and/or straight-chain of fatty acids. The protein is Beta-ketoacyl-[acyl-carrier-protein] synthase III of Chlorobium phaeobacteroides (strain DSM 266 / SMG 266 / 2430).